Consider the following 274-residue polypeptide: Chemotaxis protein methyltransferase 1 (274 aa).

The CheR-type methyltransferase domain occupies 1–274 (MSAANADFEL…CSPGIIYRAK (274 aa)). Residues Asn-72, Thr-74, Arg-78, Glu-115, Asp-144, 200–201 (NL), and 217–218 (RN) each bind S-adenosyl-L-methionine.

It catalyses the reaction L-glutamyl-[protein] + S-adenosyl-L-methionine = [protein]-L-glutamate 5-O-methyl ester + S-adenosyl-L-homocysteine. Its function is as follows. Methylation of the membrane-bound methyl-accepting chemotaxis proteins (MCP) to form gamma-glutamyl methyl ester residues in MCP. This is Chemotaxis protein methyltransferase 1 (cheR1) from Pseudomonas aeruginosa (strain ATCC 15692 / DSM 22644 / CIP 104116 / JCM 14847 / LMG 12228 / 1C / PRS 101 / PAO1).